Here is a 498-residue protein sequence, read N- to C-terminus: ATP synthase subunit beta, chloroplastic (498 aa).

172–179 (GGAGVGKT) provides a ligand contact to ATP.

The protein belongs to the ATPase alpha/beta chains family. In terms of assembly, F-type ATPases have 2 components, CF(1) - the catalytic core - and CF(0) - the membrane proton channel. CF(1) has five subunits: alpha(3), beta(3), gamma(1), delta(1), epsilon(1). CF(0) has four main subunits: a(1), b(1), b'(1) and c(9-12).

It localises to the plastid. The protein resides in the chloroplast thylakoid membrane. It catalyses the reaction ATP + H2O + 4 H(+)(in) = ADP + phosphate + 5 H(+)(out). Produces ATP from ADP in the presence of a proton gradient across the membrane. The catalytic sites are hosted primarily by the beta subunits. This is ATP synthase subunit beta, chloroplastic from Triticum aestivum (Wheat).